Here is a 533-residue protein sequence, read N- to C-terminus: Probable DNA ligase (533 aa).

Residue Glu-211 participates in ATP binding. Catalysis depends on Lys-213, which acts as the N6-AMP-lysine intermediate. ATP-binding residues include Arg-218, Arg-233, Glu-262, Phe-302, Arg-374, and Lys-380. Residues 512 to 533 (LAGEAAEKGQAEGGGEELEDDG) form a disordered region.

This sequence belongs to the ATP-dependent DNA ligase family. It depends on Mg(2+) as a cofactor.

The enzyme catalyses ATP + (deoxyribonucleotide)n-3'-hydroxyl + 5'-phospho-(deoxyribonucleotide)m = (deoxyribonucleotide)n+m + AMP + diphosphate.. DNA ligase that seals nicks in double-stranded DNA during DNA replication, DNA recombination and DNA repair. This Sorangium cellulosum (strain So ce56) (Polyangium cellulosum (strain So ce56)) protein is Probable DNA ligase.